Here is a 446-residue protein sequence, read N- to C-terminus: Eukaryotic translation initiation factor 3 subunit E (446 aa).

Positions 256–425 (TDLFFSPAYI…GTVIMNHPPQ (170 aa)) constitute a PCI domain.

This sequence belongs to the eIF-3 subunit E family. In terms of assembly, component of the eukaryotic translation initiation factor 3 (eIF-3) complex.

Its subcellular location is the cytoplasm. Functionally, component of the eukaryotic translation initiation factor 3 (eIF-3) complex, which is involved in protein synthesis of a specialized repertoire of mRNAs and, together with other initiation factors, stimulates binding of mRNA and methionyl-tRNAi to the 40S ribosome. The eIF-3 complex specifically targets and initiates translation of a subset of mRNAs involved in cell proliferation. The protein is Eukaryotic translation initiation factor 3 subunit E (int6) of Aspergillus terreus (strain NIH 2624 / FGSC A1156).